The following is a 211-amino-acid chain: Urease accessory protein UreG (211 aa).

A GTP-binding site is contributed by 11–18; the sequence is GPVGAGKT.

Belongs to the SIMIBI class G3E GTPase family. UreG subfamily. Homodimer. UreD, UreF and UreG form a complex that acts as a GTP-hydrolysis-dependent molecular chaperone, activating the urease apoprotein by helping to assemble the nickel containing metallocenter of UreC. The UreE protein probably delivers the nickel.

It localises to the cytoplasm. Functionally, facilitates the functional incorporation of the urease nickel metallocenter. This process requires GTP hydrolysis, probably effectuated by UreG. The protein is Urease accessory protein UreG of Actinobacillus pleuropneumoniae serotype 7 (strain AP76).